The chain runs to 67 residues: Large ribosomal subunit protein bL35 (67 aa).

A compositionally biased stretch (basic residues) spans 1–16; it reads MPKMKTKSSAKKRFRV. The disordered stretch occupies residues 1 to 24; that stretch reads MPKMKTKSSAKKRFRVRPGGTVKR.

Belongs to the bacterial ribosomal protein bL35 family.

The sequence is that of Large ribosomal subunit protein bL35 from Delftia acidovorans (strain DSM 14801 / SPH-1).